The sequence spans 217 residues: Kunitz-type trypsin inhibitor-like 1 protein (217 aa).

An N-terminal signal peptide occupies residues 1–26 (MKPLSPLTLSFFLFVFITNLSLAFSN). 2 disulfide bridges follow: Cys-70–Cys-115 and Cys-168–Cys-175. Residue Asn-191 is glycosylated (N-linked (GlcNAc...) asparagine).

This sequence belongs to the protease inhibitor I3 (leguminous Kunitz-type inhibitor) family. As to expression, expressed in roots, leaves, epidermal layers of elongating stems, meristems and in the vascular system.

The protein resides in the secreted. Might act as a protease inhibitor involved in plant defense responses. The chain is Kunitz-type trypsin inhibitor-like 1 protein (PIP20-1) from Pisum sativum (Garden pea).